The sequence spans 137 residues: Large ribosomal subunit protein uL16 (137 aa).

Belongs to the universal ribosomal protein uL16 family. In terms of assembly, part of the 50S ribosomal subunit.

Its function is as follows. Binds 23S rRNA and is also seen to make contacts with the A and possibly P site tRNAs. This is Large ribosomal subunit protein uL16 from Rhizobium johnstonii (strain DSM 114642 / LMG 32736 / 3841) (Rhizobium leguminosarum bv. viciae).